We begin with the raw amino-acid sequence, 227 residues long: Ribose-5-phosphate isomerase A (227 aa).

Residues 26 to 29 (TGST), 82 to 85 (DGAD), and 95 to 98 (KGGG) each bind substrate. Glutamate 104 (proton acceptor) is an active-site residue. A substrate-binding site is contributed by lysine 122.

This sequence belongs to the ribose 5-phosphate isomerase family. Homodimer.

The catalysed reaction is aldehydo-D-ribose 5-phosphate = D-ribulose 5-phosphate. The protein operates within carbohydrate degradation; pentose phosphate pathway; D-ribose 5-phosphate from D-ribulose 5-phosphate (non-oxidative stage): step 1/1. Functionally, catalyzes the reversible conversion of ribose-5-phosphate to ribulose 5-phosphate. The sequence is that of Ribose-5-phosphate isomerase A from Streptococcus pneumoniae serotype 2 (strain D39 / NCTC 7466).